The following is a 1465-amino-acid chain: DNA polymerase III PolC-type (1465 aa).

The Exonuclease domain occupies 431 to 583 (DVETTGLSAM…YDAEATGRLL (153 aa)).

This sequence belongs to the DNA polymerase type-C family. PolC subfamily.

The protein resides in the cytoplasm. It catalyses the reaction DNA(n) + a 2'-deoxyribonucleoside 5'-triphosphate = DNA(n+1) + diphosphate. Functionally, required for replicative DNA synthesis. This DNA polymerase also exhibits 3' to 5' exonuclease activity. The protein is DNA polymerase III PolC-type of Streptococcus pyogenes.